A 210-amino-acid chain; its full sequence is Probable GTP-binding protein EngB (210 aa).

An EngB-type G domain is found at 30-204 (QGYEVAFAGR…YRVLADWMEL (175 aa)). Residues 38 to 45 (GRSNAGKS), 64 to 68 (GRTQL), 82 to 85 (DLPG), 149 to 152 (TKAD), and 182 to 185 (LFSA) each bind GTP. Mg(2+)-binding residues include serine 45 and threonine 66.

This sequence belongs to the TRAFAC class TrmE-Era-EngA-EngB-Septin-like GTPase superfamily. EngB GTPase family. The cofactor is Mg(2+).

Its function is as follows. Necessary for normal cell division and for the maintenance of normal septation. This chain is Probable GTP-binding protein EngB, found in Pseudomonas putida (strain ATCC 700007 / DSM 6899 / JCM 31910 / BCRC 17059 / LMG 24140 / F1).